The chain runs to 143 residues: Mite group 2 allergen Pso o 2 (143 aa).

The N-terminal stretch at 1–17 is a signal peptide; that stretch reads MMKTLVVLAITLAVVSA. Intrachain disulfides connect cysteine 25/cysteine 134, cysteine 38/cysteine 43, and cysteine 89/cysteine 94.

Belongs to the NPC2 family.

It is found in the secreted. This Psoroptes ovis (Sheep scab mite) protein is Mite group 2 allergen Pso o 2 (ALLA).